A 489-amino-acid polypeptide reads, in one-letter code: GTPase Der (489 aa).

EngA-type G domains lie at 30–199 and 227–403; these read PVVS…KDKP and FRLA…SRSH. GTP-binding positions include 36 to 43, 85 to 89, 151 to 154, 233 to 240, 280 to 284, and 345 to 348; these read GRQNVGKS, DTPGL, NKAD, GKPNSGKS, DTAGI, and NKWD. The region spanning 404–488 is the KH-like domain; it reads RKVSTSELNK…PIRLEFRSDR (85 aa).

Belongs to the TRAFAC class TrmE-Era-EngA-EngB-Septin-like GTPase superfamily. EngA (Der) GTPase family. As to quaternary structure, associates with the 50S ribosomal subunit.

GTPase that plays an essential role in the late steps of ribosome biogenesis. This is GTPase Der from Leptospira interrogans serogroup Icterohaemorrhagiae serovar copenhageni (strain Fiocruz L1-130).